Consider the following 91-residue polypeptide: UPF0223 protein SACOL1106 (91 aa).

Belongs to the UPF0223 family.

The polypeptide is UPF0223 protein SACOL1106 (Staphylococcus aureus (strain COL)).